A 177-amino-acid polypeptide reads, in one-letter code: Inner membrane-spanning protein YciB (177 aa).

5 helical membrane-spanning segments follow: residues 23–43, 50–70, 73–93, 119–139, and 149–169; these read MFVATGVAIAATAVMVAWAWF, TMQWISLGLIVVLGGATLLLH, HFIMWKPTVLYWVMGAGLLIS, LTWAWSGFFAFMGALNLFVAY, and FKLFGGMGLMLLFVIAQSLFL.

Belongs to the YciB family.

Its subcellular location is the cell inner membrane. Plays a role in cell envelope biogenesis, maintenance of cell envelope integrity and membrane homeostasis. The sequence is that of Inner membrane-spanning protein YciB from Chromobacterium violaceum (strain ATCC 12472 / DSM 30191 / JCM 1249 / CCUG 213 / NBRC 12614 / NCIMB 9131 / NCTC 9757 / MK).